The sequence spans 296 residues: MRLWIVSVLVLTHLVHGALCWGKDGHYTVCKLAEGFFEDDTIAAVKKLLPESVDGGGLADFCSWPDEIKKLSQWQWTSTLHYVNTPEYRCNYEYCRDCHDTHKHKDWCVTGAIFNYTNQLMSASENSQNIVHYNLTEALLFLSHYMGDVHQPLHTGFLGDLGGNTIIVNWYHNKSNLHHVWDNMIIDSALETYYNSSLPHMIQALQAKLKNGWSNDVPSWKSCHFHQKACPNLYASESIDLACKYAYRNATPGTTLGDEYFLSRLPVVEKRLAQGGIRLAATLNRIFSAKPKLAGL.

An N-terminal signal peptide occupies residues 1–20 (MRLWIVSVLVLTHLVHGALC). Positions 21 and 26 each coordinate a divalent metal cation. Residue 21-26 (WGKDGH) coordinates substrate. Residues C30 and C62 are joined by a disulfide bond. A divalent metal cation-binding residues include D66 and H81. Substrate contacts are provided by residues 66 to 72 (DEIKKLS), 81 to 84 (HYVN), and 91 to 96 (NYEYCR). Disulfide bonds link C90–C243, C98–C108, and C223–C230. Positions 115 and 133 each coordinate substrate. A glycan (N-linked (GlcNAc...) asparagine) is linked at N115. The N-linked (GlcNAc...) asparagine glycan is linked to N134. The a divalent metal cation site is built by H144, D148, and H154. Residues 144-193 (HYMGDVHQPLHTGFLGDLGGNTIIVNWYHNKSNLHHVWDNMIIDSALETY) form a substrate binding region. Residue N173 is glycosylated (N-linked (GlcNAc...) asparagine). Residues H178 and D182 each coordinate a divalent metal cation. N195 is a glycosylation site (N-linked (GlcNAc...) asparagine). Positions 281-296 (ATLNRIFSAKPKLAGL) are cleaved as a propeptide — removed in mature form.

Belongs to the nuclease type I family. As to quaternary structure, monomer. Zn(2+) serves as cofactor.

It carries out the reaction Endonucleolytic cleavage to 5'-phosphomononucleotide and 5'-phosphooligonucleotide end-products.. Functionally, hydrolyzes, with low efficiency, only single-stranded DNA and RNA without apparent specificity for bases. Endonuclease that recognizes and cleaves some mismatches with high efficiency, including heteroduplex double-stranded DNA; mostly efficient on T/G, A/G and G/G mismatches, less efficient for T/T and poorly efficient for C/C, A/A, T/C and A/C. The protein is Endonuclease 5 of Arabidopsis thaliana (Mouse-ear cress).